We begin with the raw amino-acid sequence, 426 residues long: Chaperone SurA (426 aa).

Residues Met-1–Ala-13 form the signal peptide. PpiC domains are found at residues Ser-164–Glu-265 and Arg-274–Gly-373.

Its subcellular location is the periplasm. It catalyses the reaction [protein]-peptidylproline (omega=180) = [protein]-peptidylproline (omega=0). In terms of biological role, chaperone involved in the correct folding and assembly of outer membrane proteins. Recognizes specific patterns of aromatic residues and the orientation of their side chains, which are found more frequently in integral outer membrane proteins. May act in both early periplasmic and late outer membrane-associated steps of protein maturation. This is Chaperone SurA from Pseudomonas fluorescens (strain Pf0-1).